The sequence spans 930 residues: Wings apart-like protein 1 (930 aa).

Residues 540 to 566 (FSPTSMSGSQSSVSGNEPTTSKTRVGS) form a disordered region. Residues 541–553 (SPTSMSGSQSSVS) show a composition bias toward low complexity. Positions 554–566 (GNEPTTSKTRVGS) are enriched in polar residues. The WAPL domain occupies 854–909 (KEAEKMIVEAYSALLLAFLSTESRSIRNSIKDYLPKRNLAILVPVLERFVAFHMTL).

Belongs to the WAPL family. Interacts with the cohesin complex throughout the cell cycle. Expressed in roots, leaves, buds and siliques.

The protein resides in the nucleus. Its subcellular location is the chromosome. Regulator of sister chromatid cohesion in meiosis which negatively regulates cohesin association with chromatin, acting as an antagonist of CTF7. Cohesion ensures that chromosome partitioning is accurate in both meiotic and mitotic cells and plays an important role in DNA repair. Essential for the prophase removal of cohesin during meiosis thus determining the timely release of meiotic cohesion. Important for proper spindle attachment and assembly during meiosis. Helps to prevent abnormal centromere association during prophase I in meiocytes. Required for early embryonic patterning. Also involved in chromosome segregation during mitosis. The sequence is that of Wings apart-like protein 1 from Arabidopsis thaliana (Mouse-ear cress).